A 197-amino-acid chain; its full sequence is Ribose 1,5-bisphosphate phosphokinase PhnN (197 aa).

21 to 28 (GPSGAGKD) provides a ligand contact to ATP.

The protein belongs to the ribose 1,5-bisphosphokinase family.

The enzyme catalyses alpha-D-ribose 1,5-bisphosphate + ATP = 5-phospho-alpha-D-ribose 1-diphosphate + ADP. It participates in metabolic intermediate biosynthesis; 5-phospho-alpha-D-ribose 1-diphosphate biosynthesis; 5-phospho-alpha-D-ribose 1-diphosphate from D-ribose 5-phosphate (route II): step 3/3. Catalyzes the phosphorylation of ribose 1,5-bisphosphate to 5-phospho-D-ribosyl alpha-1-diphosphate (PRPP). This Rhizobium etli (strain CIAT 652) protein is Ribose 1,5-bisphosphate phosphokinase PhnN.